The primary structure comprises 1407 residues: YEATS domain-containing protein 2 (1407 aa).

A Glycyl lysine isopeptide (Lys-Gly) (interchain with G-Cter in SUMO2) cross-link involves residue K9. Positions 54–80 (MKNKEHEIDVIDQRLIEARRMMDKLRA) form a coiled coil. K113 participates in a covalent cross-link: Glycyl lysine isopeptide (Lys-Gly) (interchain with G-Cter in SUMO2). Residues 116-196 (LESPSRSSSP…SHKRELRNAD (81 aa)) form a disordered region. 3 positions are modified to phosphoserine: S118, S120, and S157. A compositionally biased stretch (polar residues) spans 119 to 148 (PSRSSSPTNQRSETPSANHSESDSLSQHND). Positions 149-165 (FLSDKDNNSNVDVEERP) are enriched in basic and acidic residues. A Glycyl lysine isopeptide (Lys-Gly) (interchain with G-Cter in SUMO2) cross-link involves residue K189. Positions 201-346 (ETSRLFVKKT…EDSVYPQSSE (146 aa)) constitute a YEATS domain. Histone H3K27cr binding regions lie at residues 260-262 (HPS) and 283-285 (WGE). The residue at position 406 (T406) is a Phosphothreonine. S446, S462, S464, S470, and S472 each carry phosphoserine. Residues 462-540 (SGSPISTPSP…GTGSPIPKIH (79 aa)) form a disordered region. The residue at position 477 (T477) is a Phosphothreonine. K486 participates in a covalent cross-link: Glycyl lysine isopeptide (Lys-Gly) (interchain with G-Cter in SUMO2). Positions 511 to 520 (STPSTGSPTS) are enriched in low complexity. S534 carries the post-translational modification Phosphoserine. K550 participates in a covalent cross-link: Glycyl lysine isopeptide (Lys-Gly) (interchain with G-Cter in SUMO2). Position 573 is a phosphoserine (S573). Residue K590 forms a Glycyl lysine isopeptide (Lys-Gly) (interchain with G-Cter in SUMO2) linkage. S625 carries the post-translational modification Phosphoserine. Residues K647 and K771 each participate in a glycyl lysine isopeptide (Lys-Gly) (interchain with G-Cter in SUMO2) cross-link. Residues 791–833 (SGSAAAGGSGSSGAGGGSGGGGGSGAGGTPSTSGPGGGPQHLT) are disordered. Gly residues predominate over residues 795–829 (AAGGSGSSGAGGGSGGGGGSGAGGTPSTSGPGGGP). A Glycyl lysine isopeptide (Lys-Gly) (interchain with G-Cter in SUMO2) cross-link involves residue K908. Residue K1095 forms a Glycyl lysine isopeptide (Lys-Gly) (interchain with G-Cter in SUMO1); alternate linkage. K1095 participates in a covalent cross-link: Glycyl lysine isopeptide (Lys-Gly) (interchain with G-Cter in SUMO2); alternate. A Glycyl lysine isopeptide (Lys-Gly) (interchain with G-Cter in SUMO2) cross-link involves residue K1115. A Phosphothreonine modification is found at T1204. Residues K1207 and K1270 each participate in a glycyl lysine isopeptide (Lys-Gly) (interchain with G-Cter in SUMO2) cross-link.

In terms of assembly, component of the ADA2A-containing complex (ATAC), composed of KAT14, KAT2A, TADA2L, TADA3L, ZZ3, MBIP, WDR5, YEATS2, SGF29 and DR1.

Its subcellular location is the nucleus. In terms of biological role, chromatin reader component of the ATAC complex, a complex with histone acetyltransferase activity on histones H3 and H4. YEATS2 specifically recognizes and binds histone H3 crotonylated at 'Lys-27' (H3K27cr). Crotonylation marks active promoters and enhancers and confers resistance to transcriptional repressors. This Mus musculus (Mouse) protein is YEATS domain-containing protein 2.